The sequence spans 208 residues: MASPDDPLRSDHMAKEPVEDTDPSTLSFAMSDKYPIQDTGLPKAKECDTVNSNCPPNSDDQPQGEENDFPDSTKDPLSGVSRNQPCKDRKGSCSCPSCSPRAPTISDLLNDQDLLDTIRIKLDPCHPTVKNWRNFASKWGMPYDELCFLEQRPQSPTLEFLFRNSQRTVGQLMELCRLYHRADVEKILRRWVDEEWPHRGHSDSSMHF.

Basic and acidic residues predominate over residues 1 to 18 (MASPDDPLRSDHMAKEPV). The tract at residues 1-99 (MASPDDPLRS…KGSCSCPSCS (99 aa)) is disordered. Over residues 49 to 61 (TVNSNCPPNSDDQ) the composition is skewed to polar residues. In terms of domain architecture, Death spans 116–195 (DTIRIKLDPC…KILRRWVDEE (80 aa)).

Binds EDAR. Self-associates and binds TRAF1, TRAF2 and TRAF3.

Its subcellular location is the cytoplasm. In terms of biological role, adapter protein that interacts with EDAR DEATH domain and couples the receptor to EDA signaling pathway during morphogenesis of ectodermal organs. Mediates the activation of NF-kappa-B. The protein is Ectodysplasin-A receptor-associated adapter protein (Edaradd) of Mus musculus (Mouse).